A 147-amino-acid chain; its full sequence is MEQTYVMVKPDGVERGLIGEIVAKIEKKGIKLVAGKLIQIDRKLAEQHYAEHIGKPFFEDLIGFITSGPVFAMVLEGDDVIKIARRMMGKTNPLEADAGTIRAEYAVHTNRNVIHGSDSPESAKREIQLFFEPHEILSYEKAVDIWV.

Positions 9, 57, 85, 91, 102, and 112 each coordinate ATP. Histidine 115 acts as the Pros-phosphohistidine intermediate in catalysis.

Belongs to the NDK family. As to quaternary structure, homotetramer. The cofactor is Mg(2+).

The protein localises to the cytoplasm. It carries out the reaction a 2'-deoxyribonucleoside 5'-diphosphate + ATP = a 2'-deoxyribonucleoside 5'-triphosphate + ADP. The enzyme catalyses a ribonucleoside 5'-diphosphate + ATP = a ribonucleoside 5'-triphosphate + ADP. Its function is as follows. Major role in the synthesis of nucleoside triphosphates other than ATP. The ATP gamma phosphate is transferred to the NDP beta phosphate via a ping-pong mechanism, using a phosphorylated active-site intermediate. This chain is Nucleoside diphosphate kinase, found in Listeria welshimeri serovar 6b (strain ATCC 35897 / DSM 20650 / CCUG 15529 / CIP 8149 / NCTC 11857 / SLCC 5334 / V8).